A 243-amino-acid chain; its full sequence is UPF0702 transmembrane protein YkjA (243 aa).

The next 3 membrane-spanning stretches (helical) occupy residues 3–23 (WMVWVFLLKPVIVFSIAYILF), 34–54 (MNNFDLLLTFAIGTIISEPIL), and 58–78 (LPMSIYYAGAFLVLYLIMSKL).

The protein belongs to the UPF0702 family.

It is found in the cell membrane. This chain is UPF0702 transmembrane protein YkjA (ykjA), found in Bacillus subtilis (strain 168).